Reading from the N-terminus, the 792-residue chain is Endonuclease MutS2 (792 aa).

334 to 341 (GPNTGGKT) contacts ATP. Residues 717 to 792 (INLIGKTTDE…DAGVTIATFK (76 aa)) form the Smr domain.

It belongs to the DNA mismatch repair MutS family. MutS2 subfamily. In terms of assembly, homodimer. Binds to stalled ribosomes, contacting rRNA.

Its function is as follows. Endonuclease that is involved in the suppression of homologous recombination and thus may have a key role in the control of bacterial genetic diversity. Functionally, acts as a ribosome collision sensor, splitting the ribosome into its 2 subunits. Detects stalled/collided 70S ribosomes which it binds and splits by an ATP-hydrolysis driven conformational change. Acts upstream of the ribosome quality control system (RQC), a ribosome-associated complex that mediates the extraction of incompletely synthesized nascent chains from stalled ribosomes and their subsequent degradation. Probably generates substrates for RQC. In Agathobacter rectalis (strain ATCC 33656 / DSM 3377 / JCM 17463 / KCTC 5835 / VPI 0990) (Eubacterium rectale), this protein is Endonuclease MutS2.